The following is a 1106-amino-acid chain: MAAGRPLAWTLTLWQAWLILIGPSSEEPFPSAVTIKSWVDKMQEDLVTLAKTASGVHQLVDIYEKYQDLYTVEPNNARQLVEIAARDIEKLLSNRSKALVRLALEAEKVQAAHQWREDFASNEVVYYNAKDDLDPEKNDSEPGSQRIKPVFIDDANFRRQVSYQHAAVHIPTDIYEGSTIVLNELNWTSALDDVFKKNREEDPSLLWQVFGSATGLARYYPASPWVDNSRTPNKIDLYDVRRRPWYIQGAASPKDMLILVDVSGSVSGLTLKLIRTSVSEMLETLSDDDFVNVASFNSNAQDVSCFQHLVQANVRNKKVLKDAVNNITAKGITDYKKGFSFAFEQLLNYNVSRANCNKIIMLFTDGGEERAQEIFAKYNKDKKVRVFTFSVGQHNYDRGPIQWMACENKGYYYEIPSIGAIRINTQEYLDVLGRPMVLAGDKAKQVQWTNVYLDALELGLVITGTLPVFNITGQFENKTNLKNQLILGVMGVDVSLEDIKRLTPRFTLCPNGYYFAIDPNGYVLLHPNLQPKPIGVGIPTINLRKRRPNVQNPKSQEPVTLDFLDAELENDIKVEIRNKMIDGESGEKTFRTLVKSQDERYIDKGNRTYTWTPVNGTDYSSLALVLPTYSFYYIKAKIEETITQARYSETLKPDNFEESGYTFLAPRDYCSDLKPSDNNTEFLLNFNEFIDRKTPNNPSCNTDLINRVLLDAGFTNELVQNYWSKQKNIKGVKARFVVTDGGITRVYPKEAGENWQENPETYEDSFYKRSLDNDNYVFTAPYFNKSGPGAYESGIMVSKAVEIYIQGKLLKPAVVGIKIDVNSWIENFTKTSIRDPCAGPVCDCKRNSDVMDCVILDDGGFLLMANHDDYTNQIGRFFGEIDPSLMRHLVNISVYAFNKSYDYQSVCEPGAAPKQGAGHRSAYVPSIADILQIGWWATAAAWSILQQFLLSLTFPRLLEAADMEDDDFTASMSKQSCITEQTQYFFDNDSKSFSGVLDCGNCSRIFHVEKLMNTNLIFIMVESKGTCPCDTRLLIQAEQTSDGPDPCDMVKQPRYRKGPDVCFDNNVLEDYTDCGGVSGLNPSLWSIIGIQFVLLWLVSGSRHCLL.

The first 26 residues, 1 to 26 (MAAGRPLAWTLTLWQAWLILIGPSSE), serve as a signal peptide directing secretion. Topologically, residues 27-1076 (EPFPSAVTIK…VLEDYTDCGG (1050 aa)) are extracellular. A glycan (N-linked (GlcNAc...) asparagine) is linked at asparagine 94. Position 121 is a phosphoserine (serine 121). 2 N-linked (GlcNAc...) asparagine glycosylation sites follow: asparagine 138 and asparagine 186. In terms of domain architecture, VWFA spans 255–432 (DMLILVDVSG…INTQEYLDVL (178 aa)). Residues aspartate 261, serine 263, and serine 265 each coordinate a divalent metal cation. The MIDAS-like motif motif lies at 261–265 (DVSGS). Residues asparagine 326 and asparagine 350 are each glycosylated (N-linked (GlcNAc...) asparagine). Cysteine 406 and cysteine 1062 are oxidised to a cystine. The Cache domain occupies 448 to 539 (WTNVYLDALE…QPKPIGVGIP (92 aa)). Asparagine 615, asparagine 784, and asparagine 891 each carry an N-linked (GlcNAc...) asparagine glycan. The chain crosses the membrane as a helical span at residues 1077–1097 (VSGLNPSLWSIIGIQFVLLWL). The Cytoplasmic portion of the chain corresponds to 1098-1106 (VSGSRHCLL).

This sequence belongs to the calcium channel subunit alpha-2/delta family. In terms of assembly, dimer formed of alpha-2-1 and delta-1 chains; disulfide-linked. Voltage-dependent calcium channels are multisubunit complexes, consisting of alpha-1 (CACNA1), alpha-2 (CACNA2D), beta (CACNB) and delta (CACNA2D) subunits in a 1:1:1:1 ratio. Post-translationally, proteolytically processed into subunits alpha-2-1 and delta-1 that are disulfide-linked. As to expression, skeletal muscle.

Its subcellular location is the membrane. The protein localises to the cell membrane. The alpha-2/delta subunit of voltage-dependent calcium channels regulates calcium current density and activation/inactivation kinetics of the calcium channel. Plays an important role in excitation-contraction coupling. This chain is Voltage-dependent calcium channel subunit alpha-2/delta-1 (CACNA2D1), found in Oryctolagus cuniculus (Rabbit).